Reading from the N-terminus, the 308-residue chain is Testis-specific Y-encoded protein 1 (308 aa).

The protein belongs to the nucleosome assembly protein (NAP) family. In terms of processing, phosphorylated. Specifically expressed in testicular tissues. Isoform 1 and isoform 2 are expressed in spermatogonia and spermatocytes. Found in early testicular carcinoma in situ, spermatogonial cells in testicular tissues of 46,X,Y female and in prostate cancer cell lines.

It is found in the cytoplasm. The protein localises to the nucleus. In terms of biological role, may be involved in sperm differentiation and proliferation. This chain is Testis-specific Y-encoded protein 1 (TSPY1), found in Homo sapiens (Human).